Consider the following 477-residue polypeptide: UDP-N-acetylmuramate--L-alanine ligase (477 aa).

122–128 (GTHGKTT) contacts ATP.

It belongs to the MurCDEF family.

The protein localises to the cytoplasm. It catalyses the reaction UDP-N-acetyl-alpha-D-muramate + L-alanine + ATP = UDP-N-acetyl-alpha-D-muramoyl-L-alanine + ADP + phosphate + H(+). Its pathway is cell wall biogenesis; peptidoglycan biosynthesis. In terms of biological role, cell wall formation. This Xanthomonas oryzae pv. oryzae (strain MAFF 311018) protein is UDP-N-acetylmuramate--L-alanine ligase.